Consider the following 1085-residue polypeptide: MALHLHRAERTDLLADGLAALLSDPLPDPFATELVLVPAKGVERWLSQRLSNRLGVCAAVEFRNPRSLIAELTGTADDDPWSPDAMVWPLLGVIDESLDEPWCATLATHLGHFEMGEEYELRQGRRYAVARRLAGLFASYARQRPQLLVDWDGLPDDLAWQKALWQALCERIDADPPHIRHAKTLVQLHESPTDLPQRLSLFGHTRLPATEVELLTALATHHDLHLWLPHPSDTLWQALSTRKGPLPRREDTSHRDVGHPLLATLGRDLREMQRLLPEPDTDEFRGRSEYPDTLLGWLQSDIAADAVRPQGRHHRREDRSIQVHSCHGPSRQIDVLREVLLGLLADDPTLEPRDILVMCPDIETYAPLITAGFGLGDVVPRTRGAHINLSAHPAHKLRVRLADRALVQTNPLLAVAAQLLALAGGRATASEVLNLAESAPVRARFGFTDDDLDAITAWTREANIRWGFDQEHRRPYGVEFLHNTWRFGIDRVLAGVAMSDDSHAWLGTTLPLDDVSSNRVELAGRFADFVEKLRRTVDQLSGTRPLHEWLDALTAGIDALALADEDWPAAQMQREFAEITARAGDTATSLRLADVRALLDRHLAGRPTRANFRTGTLTVCTMVPMRSVPHRVVCLVGLDDGVFPRLGAVDGDDALARDPMTGERDIRSEDRQLLLDAILAATQTLVITYTGANEYSGQARPPAVPLAELIDTLKITTEDSALDVLTRHPLQPFDKRNVIPGALVPDEPFTFDQTALVAARASSGERAMRPAFFSDPLPPPLPDDVALEDLLNFFKDPVKGFFRALDYTLPWDVEGVSDVMPVDIDALEEWTVGDRMLSDILRGMTPAAAQQAEWRRGTLPPGQLGWRRAIALRDQCALLAAEALGFRDTDGQAYDVDIDLGGGRRLTGTVSPVFGDRLVSVTYSKLGGKHLLQSWIPLLALAAGYPDRDWLAVCIGRPARGTTPRVEGLGGPDNPVDLLADLVAIYDAGRREPLPLPVKTSYAWAEARHCGDDPEQKAGFRWRSGRYPGEDAEPAHVRAWGRDAWLRDLMQPLRPGEEFEGETHRLGAYSSRLWLPLLRAERPVR.

This sequence belongs to the RecC family. In terms of assembly, heterotrimer of RecB, RecC and RecD. All subunits contribute to DNA-binding.

In terms of biological role, a helicase/nuclease that prepares dsDNA breaks (DSB) for recombinational DNA repair. Binds to DSBs and unwinds DNA via a highly rapid and processive ATP-dependent bidirectional helicase activity. Holoenzyme degrades any linearized DNA that is unable to undergo homologous recombination. In the holoenzyme this subunit recognizes the wild-type Chi sequence, and when added to isolated RecB increases its ATP-dependent helicase processivity. Unlike the case in E.coli, suppresses RecA-dependent homologous recombination, is instead required for single-strand annealing pathway repair of DSB. In Mycolicibacterium smegmatis (strain ATCC 700084 / mc(2)155) (Mycobacterium smegmatis), this protein is RecBCD enzyme subunit RecC.